The following is a 503-amino-acid chain: Probable cytosol aminopeptidase (503 aa).

2 residues coordinate Mn(2+): Lys-274 and Asp-279. The active site involves Lys-286. The Mn(2+) site is built by Asp-297, Asp-356, and Glu-358. Arg-360 is an active-site residue.

The protein belongs to the peptidase M17 family. Mn(2+) serves as cofactor.

Its subcellular location is the cytoplasm. It carries out the reaction Release of an N-terminal amino acid, Xaa-|-Yaa-, in which Xaa is preferably Leu, but may be other amino acids including Pro although not Arg or Lys, and Yaa may be Pro. Amino acid amides and methyl esters are also readily hydrolyzed, but rates on arylamides are exceedingly low.. It catalyses the reaction Release of an N-terminal amino acid, preferentially leucine, but not glutamic or aspartic acids.. In terms of biological role, presumably involved in the processing and regular turnover of intracellular proteins. Catalyzes the removal of unsubstituted N-terminal amino acids from various peptides. In Burkholderia thailandensis (strain ATCC 700388 / DSM 13276 / CCUG 48851 / CIP 106301 / E264), this protein is Probable cytosol aminopeptidase.